Reading from the N-terminus, the 421-residue chain is Gamma-glutamyl phosphate reductase (421 aa).

It belongs to the gamma-glutamyl phosphate reductase family.

The protein resides in the cytoplasm. It catalyses the reaction L-glutamate 5-semialdehyde + phosphate + NADP(+) = L-glutamyl 5-phosphate + NADPH + H(+). It functions in the pathway amino-acid biosynthesis; L-proline biosynthesis; L-glutamate 5-semialdehyde from L-glutamate: step 2/2. Functionally, catalyzes the NADPH-dependent reduction of L-glutamate 5-phosphate into L-glutamate 5-semialdehyde and phosphate. The product spontaneously undergoes cyclization to form 1-pyrroline-5-carboxylate. This chain is Gamma-glutamyl phosphate reductase, found in Pseudomonas syringae pv. tomato (strain ATCC BAA-871 / DC3000).